Consider the following 957-residue polypeptide: Mediator of RNA polymerase II transcription subunit 16 (957 aa).

Positions 855–883 are disordered; the sequence is YTEVDAAPSGKTNAQGPPQQPQPQQQRRR.

It belongs to the Mediator complex subunit 16 family. In terms of assembly, component of the Mediator complex.

It is found in the nucleus. Component of the Mediator complex, a coactivator involved in the regulated transcription of nearly all RNA polymerase II-dependent genes. Mediator functions as a bridge to convey information from gene-specific regulatory proteins to the basal RNA polymerase II transcription machinery. Mediator is recruited to promoters by direct interactions with regulatory proteins and serves as a scaffold for the assembly of a functional preinitiation complex with RNA polymerase II and the general transcription factors. The sequence is that of Mediator of RNA polymerase II transcription subunit 16 (sin4) from Aspergillus clavatus (strain ATCC 1007 / CBS 513.65 / DSM 816 / NCTC 3887 / NRRL 1 / QM 1276 / 107).